The primary structure comprises 269 residues: Bis(5'-nucleosyl)-tetraphosphatase, symmetrical (269 aa).

The protein belongs to the Ap4A hydrolase family.

The catalysed reaction is P(1),P(4)-bis(5'-adenosyl) tetraphosphate + H2O = 2 ADP + 2 H(+). Its function is as follows. Hydrolyzes diadenosine 5',5'''-P1,P4-tetraphosphate to yield ADP. The protein is Bis(5'-nucleosyl)-tetraphosphatase, symmetrical of Vibrio vulnificus (strain YJ016).